A 206-amino-acid polypeptide reads, in one-letter code: Octanoyltransferase (206 aa).

The region spanning 30 to 206 (PETNDEIWLV…EFVTLLNNSI (177 aa)) is the BPL/LPL catalytic domain. Substrate is bound by residues 69-76 (RGGQVTYH), 137-139 (SLG), and 150-152 (GIA). Cys-168 functions as the Acyl-thioester intermediate in the catalytic mechanism.

It belongs to the LipB family.

It is found in the cytoplasm. The catalysed reaction is octanoyl-[ACP] + L-lysyl-[protein] = N(6)-octanoyl-L-lysyl-[protein] + holo-[ACP] + H(+). The protein operates within protein modification; protein lipoylation via endogenous pathway; protein N(6)-(lipoyl)lysine from octanoyl-[acyl-carrier-protein]: step 1/2. In terms of biological role, catalyzes the transfer of endogenously produced octanoic acid from octanoyl-acyl-carrier-protein onto the lipoyl domains of lipoate-dependent enzymes. Lipoyl-ACP can also act as a substrate although octanoyl-ACP is likely to be the physiological substrate. The protein is Octanoyltransferase of Francisella tularensis subsp. novicida (strain U112).